We begin with the raw amino-acid sequence, 196 residues long: NADH-quinone oxidoreductase subunit I (196 aa).

4Fe-4S ferredoxin-type domains follow at residues 54–84 (LNRW…VEGA) and 104–133 (RVYQ…MTNE). [4Fe-4S] cluster-binding residues include Cys64, Cys67, Cys70, Cys74, Cys113, Cys116, Cys119, and Cys123.

This sequence belongs to the complex I 23 kDa subunit family. In terms of assembly, NDH-1 is composed of 14 different subunits. Subunits NuoA, H, J, K, L, M, N constitute the membrane sector of the complex. It depends on [4Fe-4S] cluster as a cofactor.

It localises to the cell membrane. It catalyses the reaction a quinone + NADH + 5 H(+)(in) = a quinol + NAD(+) + 4 H(+)(out). Functionally, NDH-1 shuttles electrons from NADH, via FMN and iron-sulfur (Fe-S) centers, to quinones in the respiratory chain. The immediate electron acceptor for the enzyme in this species is believed to be ubiquinone. Couples the redox reaction to proton translocation (for every two electrons transferred, four hydrogen ions are translocated across the cytoplasmic membrane), and thus conserves the redox energy in a proton gradient. In Nocardioides sp. (strain ATCC BAA-499 / JS614), this protein is NADH-quinone oxidoreductase subunit I.